The primary structure comprises 311 residues: Acetyl-coenzyme A carboxylase carboxyl transferase subunit beta (311 aa).

A CoA carboxyltransferase N-terminal domain is found at 32–299 (LWVKCPVSEE…TSMPAALTPP (268 aa)). The interval 291–311 (SMPAALTPPAPDHVVADGGSH) is disordered.

The protein belongs to the AccD/PCCB family. As to quaternary structure, acetyl-CoA carboxylase is a heterohexamer composed of biotin carboxyl carrier protein (AccB), biotin carboxylase (AccC) and two subunits each of ACCase subunit alpha (AccA) and ACCase subunit beta (AccD).

It is found in the cytoplasm. It catalyses the reaction N(6)-carboxybiotinyl-L-lysyl-[protein] + acetyl-CoA = N(6)-biotinyl-L-lysyl-[protein] + malonyl-CoA. Its pathway is lipid metabolism; malonyl-CoA biosynthesis; malonyl-CoA from acetyl-CoA: step 1/1. Its function is as follows. Component of the acetyl coenzyme A carboxylase (ACC) complex. Biotin carboxylase (BC) catalyzes the carboxylation of biotin on its carrier protein (BCCP) and then the CO(2) group is transferred by the transcarboxylase to acetyl-CoA to form malonyl-CoA. This is Acetyl-coenzyme A carboxylase carboxyl transferase subunit beta from Maricaulis maris (strain MCS10) (Caulobacter maris).